The primary structure comprises 582 residues: Proline--tRNA ligase (582 aa).

This sequence belongs to the class-II aminoacyl-tRNA synthetase family. ProS type 1 subfamily. As to quaternary structure, homodimer.

The protein localises to the cytoplasm. The catalysed reaction is tRNA(Pro) + L-proline + ATP = L-prolyl-tRNA(Pro) + AMP + diphosphate. Functionally, catalyzes the attachment of proline to tRNA(Pro) in a two-step reaction: proline is first activated by ATP to form Pro-AMP and then transferred to the acceptor end of tRNA(Pro). As ProRS can inadvertently accommodate and process non-cognate amino acids such as alanine and cysteine, to avoid such errors it has two additional distinct editing activities against alanine. One activity is designated as 'pretransfer' editing and involves the tRNA(Pro)-independent hydrolysis of activated Ala-AMP. The other activity is designated 'posttransfer' editing and involves deacylation of mischarged Ala-tRNA(Pro). The misacylated Cys-tRNA(Pro) is not edited by ProRS. The protein is Proline--tRNA ligase of Mycobacterium avium (strain 104).